Reading from the N-terminus, the 340-residue chain is GTPase Obg (340 aa).

Residues 1–158 (MSFIDEAKVY…KYITLKLKII (158 aa)) enclose the Obg domain. The OBG-type G domain maps to 159 to 325 (SDIGIIGLPN…LSTLIQYIHK (167 aa)). Residues 165-172 (GLPNAGKS), 190-194 (FTTLE), 211-214 (DIPG), 278-281 (NKSD), and 306-308 (SSI) contribute to the GTP site. The Mg(2+) site is built by S172 and T192.

Belongs to the TRAFAC class OBG-HflX-like GTPase superfamily. OBG GTPase family. In terms of assembly, monomer. Mg(2+) serves as cofactor.

It is found in the cytoplasm. Functionally, an essential GTPase which binds GTP, GDP and possibly (p)ppGpp with moderate affinity, with high nucleotide exchange rates and a fairly low GTP hydrolysis rate. Plays a role in control of the cell cycle, stress response, ribosome biogenesis and in those bacteria that undergo differentiation, in morphogenesis control. The chain is GTPase Obg from Ehrlichia chaffeensis (strain ATCC CRL-10679 / Arkansas).